A 408-amino-acid polypeptide reads, in one-letter code: MTVYYKGFPQSDRNEAIKMVNVDELEDRVRKVMPEAAYYYIASGSENEWTWRNNTAAFNHFQIVPRSLTNMDNPSTETQFMGMDLKTPIMICPIACHGIAHKDAEVATAQGAKAAGALFSSSTYANRSVEDIATATGDSPKFFQLYLSKDWDFNKMVFDAVKSAGYKGIMLTVDALVSGYREANLRTNFTFPVPLDFFTRYVGAEGEGMSVAQMYANSAQKIGPADVAKIKEMSGLPVFVKGVMNAEDAYMAIGAGADGIVVSNHGGREIDTAPATIDMLPEIAAAVNGRVPIILDSGVRRGSHVFKALALGADLVGIGRPFLYGLALGGAKGVESVINQINNEFKILMQLTGCKTVEDVKHADIRQINYTADNLPSNTDPSVRRAYPVTKENQMEGTQDAATGASKH.

Positions 14–370 constitute an FMN hydroxy acid dehydrogenase domain; sequence NEAIKMVNVD…KHADIRQINY (357 aa). Tyrosine 40 is a pyruvate binding site. FMN-binding positions include 93–95, serine 122, and glutamine 144; that span reads PIA. Tyrosine 146 lines the pyruvate pocket. Position 172 (threonine 172) interacts with FMN. Residue arginine 181 coordinates pyruvate. FMN is bound by residues lysine 241 and serine 263. Pyruvate-binding residues include histidine 265 and arginine 268. Histidine 265 (proton acceptor) is an active-site residue. Residues 296–300 and arginine 320 contribute to the FMN site; that span reads DSGVR.

It belongs to the FMN-dependent alpha-hydroxy acid dehydrogenase family. In terms of assembly, homotetramer. FMN is required as a cofactor.

It catalyses the reaction a (2S)-2-hydroxycarboxylate + O2 = a 2-oxocarboxylate + H2O2. It carries out the reaction (S)-lactate + O2 = pyruvate + H2O2. The enzyme catalyses 2-hydroxyoctanoate + O2 = 2-oxooctanoate + H2O2. The catalysed reaction is glycolate + O2 = glyoxylate + H2O2. It catalyses the reaction mandelate + O2 = phenylglyoxylate + H2O2. It carries out the reaction 2-hydroxyoctadecanoate + O2 = 2-oxooctadecanoate + H2O2. Oxidase that catalyzes the oxidation of a broad range of 2-hydroxyacids in vitro, such as (S)-lactate, 2-hydroxyoctanoate, and to a lesser extent glycolate, mandelate and 2-hydroxyoctadecanoate, to the corresponding 2-oxoacids, with a reduction of O2 to H2O2. May be involved in the utilization of L-lactate as an energy source for growth. This is L-lactate oxidase from Lactobacillus jensenii.